Consider the following 111-residue polypeptide: Pyrimidine/purine nucleoside phosphorylase 1 (111 aa).

This sequence belongs to the nucleoside phosphorylase PpnP family.

It carries out the reaction a purine D-ribonucleoside + phosphate = a purine nucleobase + alpha-D-ribose 1-phosphate. The catalysed reaction is adenosine + phosphate = alpha-D-ribose 1-phosphate + adenine. The enzyme catalyses cytidine + phosphate = cytosine + alpha-D-ribose 1-phosphate. It catalyses the reaction guanosine + phosphate = alpha-D-ribose 1-phosphate + guanine. It carries out the reaction inosine + phosphate = alpha-D-ribose 1-phosphate + hypoxanthine. The catalysed reaction is thymidine + phosphate = 2-deoxy-alpha-D-ribose 1-phosphate + thymine. The enzyme catalyses uridine + phosphate = alpha-D-ribose 1-phosphate + uracil. It catalyses the reaction xanthosine + phosphate = alpha-D-ribose 1-phosphate + xanthine. Catalyzes the phosphorolysis of diverse nucleosides, yielding D-ribose 1-phosphate and the respective free bases. Can use uridine, adenosine, guanosine, cytidine, thymidine, inosine and xanthosine as substrates. Also catalyzes the reverse reactions. The protein is Pyrimidine/purine nucleoside phosphorylase 1 of Psychrobacter cryohalolentis (strain ATCC BAA-1226 / DSM 17306 / VKM B-2378 / K5).